Reading from the N-terminus, the 362-residue chain is Glutamate--cysteine ligase (362 aa).

Belongs to the glutamate--cysteine ligase type 2 family. YbdK subfamily.

It catalyses the reaction L-cysteine + L-glutamate + ATP = gamma-L-glutamyl-L-cysteine + ADP + phosphate + H(+). Its function is as follows. Catalyzes the synthesis of gamma-glutamylcysteine (gamma-GC), the main low-molecular-weight thiol compound instead of glutathione in halophilic archaea. This chain is Glutamate--cysteine ligase, found in Natronomonas pharaonis (strain ATCC 35678 / DSM 2160 / CIP 103997 / JCM 8858 / NBRC 14720 / NCIMB 2260 / Gabara) (Halobacterium pharaonis).